The sequence spans 284 residues: 4-diphosphocytidyl-2-C-methyl-D-erythritol kinase (284 aa).

K14 is a catalytic residue. 98–108 (PMGGGIGGGSS) is a binding site for ATP. The active site involves D140.

This sequence belongs to the GHMP kinase family. IspE subfamily.

It catalyses the reaction 4-CDP-2-C-methyl-D-erythritol + ATP = 4-CDP-2-C-methyl-D-erythritol 2-phosphate + ADP + H(+). The protein operates within isoprenoid biosynthesis; isopentenyl diphosphate biosynthesis via DXP pathway; isopentenyl diphosphate from 1-deoxy-D-xylulose 5-phosphate: step 3/6. Functionally, catalyzes the phosphorylation of the position 2 hydroxy group of 4-diphosphocytidyl-2C-methyl-D-erythritol. The chain is 4-diphosphocytidyl-2-C-methyl-D-erythritol kinase from Shewanella woodyi (strain ATCC 51908 / MS32).